Reading from the N-terminus, the 93-residue chain is Large ribosomal subunit protein bL27 (93 aa).

A propeptide spanning residues Met-1–Phe-9 is cleaved from the precursor.

This sequence belongs to the bacterial ribosomal protein bL27 family. Post-translationally, the N-terminus is cleaved by ribosomal processing cysteine protease Prp.

The sequence is that of Large ribosomal subunit protein bL27 from Ruminiclostridium cellulolyticum (strain ATCC 35319 / DSM 5812 / JCM 6584 / H10) (Clostridium cellulolyticum).